A 473-amino-acid polypeptide reads, in one-letter code: MAP kinase-activated protein kinase 5 (473 aa).

A Protein kinase domain is found at 22 to 304 (INWTQKLGAG…IEGVLDHPWL (283 aa)). Residues 28–36 (LGAGISGPV) and lysine 51 each bind ATP. Serine 115 carries the phosphoserine; by PKA modification. Aspartate 148 (proton acceptor) is an active-site residue. Threonine 182 carries the phosphothreonine; by MAPK11, MAPK14, MAPK4, MAPK6 and PKA modification. Phosphoserine is present on residues serine 212 and serine 354. The stretch at 409–440 (ENEDEKLNEVMQEAWKYNRECKLLRDALQSFS) forms a coiled coil.

Belongs to the protein kinase superfamily. CAMK Ser/Thr protein kinase family. Interacts with SQSTM1. Interacts with ERK3/MAPK6 and ERK4/MAPK4 (via FRIEDE motif); the interaction is direct. Interacts with YWHAE; the interaction prevents phosphorylation of HSP27/HSPB1 leading to disrupt F-actin polymerization. Phosphorylated on Thr-182 ERK3/MAPK6 or ERK4/MAPK4; which is the regulatory phosphorylation site and is located on the T-loop/loop 12, leading to activation. Phosphorylation at Thr-182 by p38-alpha/MAPK14, p38-beta/MAPK11 is subject to debate. Phosphorylated at Ser-115 by PKA/PRKACA, leading to localization to the cytoplasm. Autophosphorylated. In terms of tissue distribution, expressed ubiquitously.

The protein resides in the cytoplasm. Its subcellular location is the nucleus. The enzyme catalyses L-seryl-[protein] + ATP = O-phospho-L-seryl-[protein] + ADP + H(+). The catalysed reaction is L-threonyl-[protein] + ATP = O-phospho-L-threonyl-[protein] + ADP + H(+). With respect to regulation, activated following phosphorylation at Thr-182 by p38-alpha/MAPK14, p38-beta/MAPK11, ERK2/MAPK1, ERK3/MAPK6, and ERK4/MAPK4. Activated by stress-related extracellular stimuli; such as H(2)O(2), arsenite, anisomycin TNF alpha and also PMA and the calcium ionophore A23187; but to a lesser extent. In vitro, activated by SQSTM1. Inhibited by diterpenoid alkaloid noroxoaconitine. Functionally, tumor suppressor serine/threonine-protein kinase involved in mTORC1 signaling and post-transcriptional regulation. Phosphorylates FOXO3, ERK3/MAPK6, ERK4/MAPK4, HSP27/HSPB1, p53/TP53 and RHEB. Acts as a tumor suppressor by mediating Ras-induced senescence and phosphorylating p53/TP53. Involved in post-transcriptional regulation of MYC by mediating phosphorylation of FOXO3: phosphorylation of FOXO3 leads to promote nuclear localization of FOXO3, enabling expression of miR-34b and miR-34c, 2 post-transcriptional regulators of MYC that bind to the 3'UTR of MYC transcript and prevent MYC translation. Acts as a negative regulator of mTORC1 signaling by mediating phosphorylation and inhibition of RHEB. Part of the atypical MAPK signaling via its interaction with ERK3/MAPK6 or ERK4/MAPK4: the precise role of the complex formed with ERK3/MAPK6 or ERK4/MAPK4 is still unclear, but the complex follows a complex set of phosphorylation events: upon interaction with atypical MAPK (ERK3/MAPK6 or ERK4/MAPK4), ERK3/MAPK6 (or ERK4/MAPK4) is phosphorylated and then mediates phosphorylation and activation of MAPKAPK5, which in turn phosphorylates ERK3/MAPK6 (or ERK4/MAPK4). Mediates phosphorylation of HSP27/HSPB1 in response to PKA/PRKACA stimulation, inducing F-actin rearrangement. The protein is MAP kinase-activated protein kinase 5 (Mapkapk5) of Mus musculus (Mouse).